A 316-amino-acid chain; its full sequence is L-lactate dehydrogenase (316 aa).

Residues Val-15, Asp-37, Lys-42, Tyr-68, and 82–83 each bind NAD(+); that span reads GL. Substrate is bound by residues Gln-85, Arg-91, and 123-126; that span reads NPVD. Residues 121 to 123 and Thr-146 each bind NAD(+); that span reads ASN. 151-154 is a binding site for substrate; it reads DTSR. Residues Arg-156 and His-171 each contribute to the beta-D-fructose 1,6-bisphosphate site. Catalysis depends on His-178, which acts as the Proton acceptor. Tyr-222 carries the phosphotyrosine modification. Substrate is bound at residue Thr-231.

It belongs to the LDH/MDH superfamily. LDH family. As to quaternary structure, homotetramer.

It localises to the cytoplasm. The catalysed reaction is (S)-lactate + NAD(+) = pyruvate + NADH + H(+). It functions in the pathway fermentation; pyruvate fermentation to lactate; (S)-lactate from pyruvate: step 1/1. Its activity is regulated as follows. Allosterically activated by fructose 1,6-bisphosphate (FBP). Catalyzes the conversion of lactate to pyruvate. This is L-lactate dehydrogenase from Borrelia turicatae (strain 91E135).